Reading from the N-terminus, the 993-residue chain is Signal peptide, CUB and EGF-like domain-containing protein 3 (993 aa).

The N-terminal stretch at 1–20 is a signal peptide; it reads MGSGRVPGLCLLVLLVHARA. Residues 29-69 form the EGF-like 1; calcium-binding domain; the sequence is DVDECVEGTDNCHIDAICQNTPRSYKCICKSGYTGDGKHCK. 26 disulfide bridges follow: C33-C46, C40-C55, C57-C68, C74-C86, C82-C95, C97-C110, C116-C127, C123-C136, C161-C172, C168-C182, C184-C197, C201-C212, C208-C221, C223-C236, C240-C251, C247-C260, C262-C275, C281-C292, C288-C301, C303-C316, C322-C332, C328-C341, C343-C355, C361-C372, C368-C381, and C383-C397. An EGF-like 2; calcium-binding domain is found at 70-111; the sequence is DVDECEREDNAGCVHDCVNIPGNYRCTCYDGFHLAHDGHNCL. The EGF-like 3; calcium-binding domain occupies 112–148; that stretch reads DVDECAEGNGGCQQSCVNMMGSYECHCREGFFLSDNQ. EGF-like domains lie at 157–198, 199–237, and 238–276; these read EGMN…RDCK, LTCNYGNGGCQHTCDDTEQGPRCGCHIKFVLHTDGKTCI, and ETCAVNNGGCDSKCHDAATGVHCTCPVGFMLQPDRKTCK. One can recognise an EGF-like 7; calcium-binding domain in the interval 277-317; that stretch reads DIDECRLNNGGCDHICRNTVGSFECSCKKGYKLLINERNCQ. The region spanning 318–356 is the EGF-like 8; calcium-binding domain; it reads DIDECSFDRTCDHICVNTPGSFQCLCHRGYLLYGITHCG. An EGF-like 9; calcium-binding domain is found at 357–398; the sequence is DVDECSINRGGCRFGCINTPGSYQCTCPAGQGRLHWNGKDCT. N-linked (GlcNAc...) asparagine glycans are attached at residues N417, N464, N685, N756, and N785. Disulfide bonds link C804–C830 and C857–C878. One can recognise a CUB domain in the interval 804-916; that stretch reads CGGELGEFTG…RGFQIPYVTY (113 aa).

In terms of assembly, forms homooligomers. Forms heterooligomers with SCUBE1 and SCUBE2. Interacts with TGFBR2 through the CUB domain; this interaction does not affect TGFB1-binding to TGFBR2. Interacts with BMP2, BMP4 and BMP7; the interaction is mediated by the CUB domain. Interacts with BMPR1A, BMPR1B and BMPR2; the interaction with BMPR1A and BMPR1B is BMP2- and BMP4-dependent. N-glycosylated. In terms of processing, proteolytic cleavage produces a CUB-containing C-terminal fragment that retains the ability to bind to TGFBR2. This reaction is catalyzed in vitro by MMP2 and, to a lesser extent, by MMP9. In terms of tissue distribution, highly expressed in osteoblasts. In normal lung, mainly expressed in bronchial epithelial cells. Tends to be up-regulated in lung cancer cells.

It localises to the secreted. Its subcellular location is the cell surface. Functionally, is a positive regulator of the BMP signaling pathway, required for proper chondrogenesis, osteogenesis and skeletal development. It acts as a coreceptor for BMP ligands, particularly BMP2 and BMP4, facilitating their interactions with BMP type I receptors. It is required for ligand-induced recruitment of BMP receptors to lipid rafts. Binds to TGFBR2 and activates TGFB signaling. In lung cancer cells, could serve as an endogenous autocrine and paracrine ligand of TGFBR2, which could regulate TGFBR2 signaling and hence modulate epithelial-mesenchymal transition and cancer progression. This is Signal peptide, CUB and EGF-like domain-containing protein 3 from Homo sapiens (Human).